The sequence spans 202 residues: Orotate phosphoribosyltransferase (202 aa).

A 5-phospho-alpha-D-ribose 1-diphosphate-binding site is contributed by 113–121 (EDIITTGGS). 2 residues coordinate orotate: T117 and R145.

The protein belongs to the purine/pyrimidine phosphoribosyltransferase family. PyrE subfamily. As to quaternary structure, homodimer. Mg(2+) is required as a cofactor.

The enzyme catalyses orotidine 5'-phosphate + diphosphate = orotate + 5-phospho-alpha-D-ribose 1-diphosphate. It participates in pyrimidine metabolism; UMP biosynthesis via de novo pathway; UMP from orotate: step 1/2. Functionally, catalyzes the transfer of a ribosyl phosphate group from 5-phosphoribose 1-diphosphate to orotate, leading to the formation of orotidine monophosphate (OMP). This Sulfurimonas denitrificans (strain ATCC 33889 / DSM 1251) (Thiomicrospira denitrificans (strain ATCC 33889 / DSM 1251)) protein is Orotate phosphoribosyltransferase.